The following is a 226-amino-acid chain: ATP synthase F(0) complex subunit a (226 aa).

Transmembrane regions (helical) follow at residues 5-25 (LFAPFMIPVMLGIPITTLIII), 68-88 (WSLMLISLFLFIASTNLLGML), 97-117 (QLSMNVGMAIPLWAGTVATGF), 136-156 (FLIPMLVIIETISLFIQPVAL), 179-199 (LVLMSTSLFTAIITFTILALL), and 201-221 (ILEFRVALIQAYVFTLLVSLY).

It belongs to the ATPase A chain family. As to quaternary structure, component of the ATP synthase complex composed at least of ATP5F1A/subunit alpha, ATP5F1B/subunit beta, ATP5MC1/subunit c (homooctomer), MT-ATP6/subunit a, MT-ATP8/subunit 8, ATP5ME/subunit e, ATP5MF/subunit f, ATP5MG/subunit g, ATP5MK/subunit k, ATP5MJ/subunit j, ATP5F1C/subunit gamma, ATP5F1D/subunit delta, ATP5F1E/subunit epsilon, ATP5PF/subunit F6, ATP5PB/subunit b, ATP5PD/subunit d, ATP5PO/subunit OSCP. ATP synthase complex consists of a soluble F(1) head domain (subunits alpha(3) and beta(3)) - the catalytic core - and a membrane F(0) domain - the membrane proton channel (subunits c, a, 8, e, f, g, k and j). These two domains are linked by a central stalk (subunits gamma, delta, and epsilon) rotating inside the F1 region and a stationary peripheral stalk (subunits F6, b, d, and OSCP). Interacts with DNAJC30; interaction is direct.

The protein localises to the mitochondrion inner membrane. The catalysed reaction is H(+)(in) = H(+)(out). Subunit a, of the mitochondrial membrane ATP synthase complex (F(1)F(0) ATP synthase or Complex V) that produces ATP from ADP in the presence of a proton gradient across the membrane which is generated by electron transport complexes of the respiratory chain. ATP synthase complex consist of a soluble F(1) head domain - the catalytic core - and a membrane F(1) domain - the membrane proton channel. These two domains are linked by a central stalk rotating inside the F(1) region and a stationary peripheral stalk. During catalysis, ATP synthesis in the catalytic domain of F(1) is coupled via a rotary mechanism of the central stalk subunits to proton translocation. With the subunit c (ATP5MC1), forms the proton-conducting channel in the F(0) domain, that contains two crucial half-channels (inlet and outlet) that facilitate proton movement from the mitochondrial intermembrane space (IMS) into the matrix. Protons are taken up via the inlet half-channel and released through the outlet half-channel, following a Grotthuss mechanism. This Balaenoptera musculus (Blue whale) protein is ATP synthase F(0) complex subunit a.